Here is a 284-residue protein sequence, read N- to C-terminus: MSQSSAEAPVTTATGPLVIKLGGEVVGGPALAILSSDLAALTRAGARAIVVHGGGAQATRLQERLGIPVRQVAGQRVTDADTLDVMKMVVAGKLNVDLCAALVAAGARPVGLHGASGPALSAVKRPPQVYAGAGPEPVDLGLVGDITGVDRGLLELLGSGGYLPVLACLGAGADGQAYNINADTVANRVAIELGAAGLFLVSDVPGVLRDVADPASRIPSLTVAEGRALIASGAVTRGMIPKLEESFAALAEGVRRIHILGRLKPGDLAREASEPGSIGTVLVP.

Residues 54-55 (GG), Arg76, and Asn179 each bind substrate.

It belongs to the acetylglutamate kinase family. ArgB subfamily.

It is found in the cytoplasm. It carries out the reaction N-acetyl-L-glutamate + ATP = N-acetyl-L-glutamyl 5-phosphate + ADP. The protein operates within amino-acid biosynthesis; L-arginine biosynthesis; N(2)-acetyl-L-ornithine from L-glutamate: step 2/4. Functionally, catalyzes the ATP-dependent phosphorylation of N-acetyl-L-glutamate. The protein is Acetylglutamate kinase of Sorangium cellulosum (strain So ce56) (Polyangium cellulosum (strain So ce56)).